Reading from the N-terminus, the 71-residue chain is ATP synthase subunit c 1 (71 aa).

A run of 2 helical transmembrane segments spans residues 4–24 and 46–66; these read FIGA…VGHV and LFVG…IALL.

It belongs to the ATPase C chain family. As to quaternary structure, F-type ATPases have 2 components, F(1) - the catalytic core - and F(0) - the membrane proton channel. F(1) has five subunits: alpha(3), beta(3), gamma(1), delta(1), epsilon(1). F(0) has four main subunits: a(1), b(1), b'(1) and c(10-14). The alpha and beta chains form an alternating ring which encloses part of the gamma chain. F(1) is attached to F(0) by a central stalk formed by the gamma and epsilon chains, while a peripheral stalk is formed by the delta, b and b' chains.

It localises to the cell inner membrane. F(1)F(0) ATP synthase produces ATP from ADP in the presence of a proton or sodium gradient. F-type ATPases consist of two structural domains, F(1) containing the extramembraneous catalytic core and F(0) containing the membrane proton channel, linked together by a central stalk and a peripheral stalk. During catalysis, ATP synthesis in the catalytic domain of F(1) is coupled via a rotary mechanism of the central stalk subunits to proton translocation. In terms of biological role, key component of the F(0) channel; it plays a direct role in translocation across the membrane. A homomeric c-ring of between 10-14 subunits forms the central stalk rotor element with the F(1) delta and epsilon subunits. This chain is ATP synthase subunit c 1, found in Cereibacter sphaeroides (strain ATCC 17029 / ATH 2.4.9) (Rhodobacter sphaeroides).